A 396-amino-acid chain; its full sequence is MSLPFSQDERDLAAGGILTIDLAALRHNYSAIATRIAPTRTAAVVKADAYGLGASRVAPAFYEAGCRDFFVAHLGEAVALKPFLKPDATLYVLNGLQPGTEAACAREGILPVLNSLEQVENWAALATRLGKKLPALLQFDTGMSRLGLSAKEFDRLLENVTLLSRIDIKFAISHLANGDEPGNAVNARQLAKMTALLARLPKLPAALANSGGTFLGKTYYFDLARPGIALYGIDPERQHDFSDKVAHENKKPKHSILPVLTLSARVIQVRDVDKGATVGYGGTYVANGPMRIATIAVGYADGLFRSLSNKGAAFFGDTRLPIIGRVSMDSITLDVTSLPEGTLKLGSLVELIGPHQRLEDVARDCDTIPYEILTALGNRYARVYVYVNGGGTSTTA.

Lysine 46 acts as the Proton acceptor; specific for D-alanine in catalysis. The residue at position 46 (lysine 46) is an N6-(pyridoxal phosphate)lysine. Arginine 145 is a binding site for substrate. Tyrosine 280 acts as the Proton acceptor; specific for L-alanine in catalysis. Substrate is bound at residue methionine 328.

Belongs to the alanine racemase family. It depends on pyridoxal 5'-phosphate as a cofactor.

The catalysed reaction is L-alanine = D-alanine. It functions in the pathway amino-acid biosynthesis; D-alanine biosynthesis; D-alanine from L-alanine: step 1/1. Catalyzes the interconversion of L-alanine and D-alanine. May also act on other amino acids. The sequence is that of Alanine racemase (alr) from Brucella abortus (strain 2308).